Reading from the N-terminus, the 461-residue chain is Cysteine--tRNA ligase (461 aa).

A Zn(2+)-binding site is contributed by Cys30. Residues Val32–His42 carry the 'HIGH' region motif. Zn(2+) is bound by residues Cys211, His236, and Glu240. The 'KMSKS' region motif lies at Lys268–Ser272. An ATP-binding site is contributed by Lys271.

The protein belongs to the class-I aminoacyl-tRNA synthetase family. In terms of assembly, monomer. Zn(2+) serves as cofactor.

The protein resides in the cytoplasm. The catalysed reaction is tRNA(Cys) + L-cysteine + ATP = L-cysteinyl-tRNA(Cys) + AMP + diphosphate. This is Cysteine--tRNA ligase from Shewanella sp. (strain W3-18-1).